Reading from the N-terminus, the 165-residue chain is Small ribosomal subunit protein bS16 (165 aa).

A disordered region spans residues tryptophan 84–glycine 165. Residues asparagine 89–alanine 130 are compositionally biased toward basic and acidic residues. The span at alanine 131–alanine 157 shows a compositional bias: low complexity.

It belongs to the bacterial ribosomal protein bS16 family.

The protein is Small ribosomal subunit protein bS16 of Caulobacter vibrioides (strain ATCC 19089 / CIP 103742 / CB 15) (Caulobacter crescentus).